A 162-amino-acid chain; its full sequence is NADH-quinone oxidoreductase subunit I (162 aa).

2 4Fe-4S ferredoxin-type domains span residues 52-82 (LRRY…IEAG) and 93-122 (TRYD…EGPN). 8 residues coordinate [4Fe-4S] cluster: cysteine 62, cysteine 65, cysteine 68, cysteine 72, cysteine 102, cysteine 105, cysteine 108, and cysteine 112.

The protein belongs to the complex I 23 kDa subunit family. As to quaternary structure, NDH-1 is composed of 14 different subunits. Subunits NuoA, H, J, K, L, M, N constitute the membrane sector of the complex. Requires [4Fe-4S] cluster as cofactor.

Its subcellular location is the cell inner membrane. The enzyme catalyses a quinone + NADH + 5 H(+)(in) = a quinol + NAD(+) + 4 H(+)(out). In terms of biological role, NDH-1 shuttles electrons from NADH, via FMN and iron-sulfur (Fe-S) centers, to quinones in the respiratory chain. The immediate electron acceptor for the enzyme in this species is believed to be ubiquinone. Couples the redox reaction to proton translocation (for every two electrons transferred, four hydrogen ions are translocated across the cytoplasmic membrane), and thus conserves the redox energy in a proton gradient. The polypeptide is NADH-quinone oxidoreductase subunit I (Beijerinckia indica subsp. indica (strain ATCC 9039 / DSM 1715 / NCIMB 8712)).